Reading from the N-terminus, the 530-residue chain is Autoinducer-2 kinase (530 aa).

Belongs to the FGGY kinase family.

The protein resides in the cytoplasm. The catalysed reaction is (S)-4,5-dihydroxypentane-2,3-dione + ATP = (2S)-2-hydroxy-3,4-dioxopentyl phosphate + ADP + H(+). Its function is as follows. Catalyzes the phosphorylation of autoinducer-2 (AI-2) to phospho-AI-2, which subsequently inactivates the transcriptional regulator LsrR and leads to the transcription of the lsr operon. Phosphorylates the ring-open form of (S)-4,5-dihydroxypentane-2,3-dione (DPD), which is the precursor to all AI-2 signaling molecules, at the C5 position. In Yersinia pestis bv. Antiqua (strain Antiqua), this protein is Autoinducer-2 kinase.